The chain runs to 250 residues: Homeobox protein Dlx4a (250 aa).

Positions 123–182 (IRKPRTIYSSLQLQALNQRFQQTQYLALPERADLAAKLGLTQTQVKIWFQNKRSKYKKIM) form a DNA-binding region, homeobox. Positions 182–202 (MKHGSSGPEGEHLQAASASGA) are disordered.

Belongs to the distal-less homeobox family.

It localises to the nucleus. In Danio rerio (Zebrafish), this protein is Homeobox protein Dlx4a (dlx4a).